The following is a 381-amino-acid chain: Zinc finger CCCH domain-containing protein 61 (381 aa).

Positions 1 to 39 are disordered; sequence MDVEHHKSGHISRPTVDIPPRKLLSSAKSPSSVSSPLRD. Residues 21–37 are compositionally biased toward low complexity; it reads RKLLSSAKSPSSVSSPL. 2 consecutive C3H1-type zinc fingers follow at residues 101-128 and 137-159; these read YTGE…HGVF and YRTE…AHSP.

In terms of assembly, interacts with MARD1/FLZ9 and RD21A via its CCCH zing finger domains.

It localises to the cytoplasm. The protein localises to the stress granule. It is found in the P-body. The sequence is that of Zinc finger CCCH domain-containing protein 61 from Arabidopsis thaliana (Mouse-ear cress).